Consider the following 262-residue polypeptide: Glycoprotein gp2 (262 aa).

Positions 1–45 (RRGSPQGGSHTTPHPDRLTPSPDDTYDDDTNHPNGRNNSIEIVPQ) are disordered.

The protein localises to the virion membrane. Functionally, virulence factor. This chain is Glycoprotein gp2, found in Equus caballus (Horse).